The primary structure comprises 972 residues: N-alpha-acetyltransferase 25, NatB auxiliary subunit (972 aa).

TPR repeat units follow at residues 11-44 (NDRRLRPIYDYLDNGNNKMAIQQADKLLKKHKDL), 45-78 (HCAKVLKAIGLQRTGKQEEAFTLAQEVAALEPTD), 79-112 (DNSLQALTILYREMHRPELVTKLYEAAVKKVPNS), and 114-146 (EYHSHLFMAYARVGEYKKMQQAGMALYKIVPKN).

Belongs to the MDM20/NAA25 family. In terms of assembly, component of the N-terminal acetyltransferase B (NatB) complex which is composed of NAA20 and NAA25.

It localises to the cytoplasm. Functionally, non-catalytic subunit of the NatB complex which catalyzes acetylation of the N-terminal methionine residues of peptides beginning with Met-Asp, Met-Glu, Met-Asn and Met-Gln. May play a role in normal cell-cycle progression. The chain is N-alpha-acetyltransferase 25, NatB auxiliary subunit (NAA25) from Homo sapiens (Human).